We begin with the raw amino-acid sequence, 859 residues long: Low-density lipoprotein receptor-related protein 12 (859 aa).

Residues 1–32 form the signal peptide; sequence MARRWSTKESPRWRSALLLLFLAGVYGNGALA. Topologically, residues 33–492 are extracellular; that stretch reads EHSENVHISG…ENCPVIVPTR (460 aa). Intrachain disulfides connect Cys-47-Cys-76 and Cys-103-Cys-122. Positions 47–159 constitute a CUB 1 domain; the sequence is CGETPEQIRA…KGFRLAYFSG (113 aa). The N-linked (GlcNAc...) asparagine glycan is linked to Asn-75. A glycan (N-linked (GlcNAc...) asparagine) is linked at Asn-146. 2 LDL-receptor class A domains span residues 165–201 and 214–255; these read NCACDQFRCGNGKCIPEAWKCNNMDECGDSSDEEICA and PCAY…IDCD. 7 disulfides stabilise this stretch: Cys-166–Cys-178, Cys-173–Cys-191, Cys-185–Cys-200, Cys-215–Cys-232, Cys-222–Cys-245, Cys-239–Cys-254, and Cys-259–Cys-285. The CUB 2 domain maps to 259–372; it reads CGQWLKYFYG…RGFNATYQVD (114 aa). 2 N-linked (GlcNAc...) asparagine glycosylation sites follow: Asn-284 and Asn-366. LDL-receptor class A domains lie at 374-411, 412-449, and 450-486; these read FCLPWEIPCGGNWGCYTEQQRCDGYWHCPNGRDEINCT, MCQKEEFPCSRNGVCYPRSDRCNYQNHCPNGSDEKNCF, and FCQPGNFHCKNNRCVFESWVCDSQDDCGDGSDEENCP. Intrachain disulfides connect Cys-375–Cys-388, Cys-382–Cys-401, Cys-395–Cys-410, Cys-413–Cys-426, Cys-420–Cys-439, Cys-433–Cys-448, Cys-451–Cys-463, Cys-458–Cys-476, and Cys-470–Cys-485. A glycan (N-linked (GlcNAc...) asparagine) is linked at Asn-409. Asn-441 is a glycosylation site (N-linked (GlcNAc...) asparagine). Residues 493–513 traverse the membrane as a helical segment; sequence VITAAVIGSLICGLLLVIALG. At 514 to 859 the chain is on the cytoplasmic side; it reads CTCKLYSLRM…TSDDEALLLC (346 aa). Disordered stretches follow at residues 623–678, 693–723, 748–770, and 802–823; these read ADGD…LPQK, ASSSTQSTRGGHADNGRDVTSVEPPSVSPAR, SSVSQNQSPLRQLDNGVSGREDD, and QGQGLRQPYNATNPGVRPSNRD. Polar residues-rich tracts occupy residues 748–757 and 802–814; these read SSVSQNQSPL and QGQGLRQPYNATN.

It belongs to the LDLR family. May interact with RACK1, ZFYVE9 and NMRK2.

The protein resides in the membrane. It is found in the coated pit. Probable receptor, which may be involved in the internalization of lipophilic molecules and/or signal transduction. May act as a tumor suppressor. This Pongo abelii (Sumatran orangutan) protein is Low-density lipoprotein receptor-related protein 12 (LRP12).